The primary structure comprises 1381 residues: DNA-directed RNA polymerase subunit beta' (1381 aa).

Positions 70, 72, 85, and 88 each coordinate Zn(2+). Mg(2+) is bound by residues Asp461, Asp463, and Asp465. 4 residues coordinate Zn(2+): Cys801, Cys875, Cys882, and Cys885. The interval 1362 to 1381 (VEIEGDENSNKKSLDMHAAN) is disordered. A compositionally biased stretch (basic and acidic residues) spans 1369 to 1381 (NSNKKSLDMHAAN).

Belongs to the RNA polymerase beta' chain family. The RNAP catalytic core consists of 2 alpha, 1 beta, 1 beta' and 1 omega subunit. When a sigma factor is associated with the core the holoenzyme is formed, which can initiate transcription. It depends on Mg(2+) as a cofactor. The cofactor is Zn(2+).

The enzyme catalyses RNA(n) + a ribonucleoside 5'-triphosphate = RNA(n+1) + diphosphate. Its function is as follows. DNA-dependent RNA polymerase catalyzes the transcription of DNA into RNA using the four ribonucleoside triphosphates as substrates. The polypeptide is DNA-directed RNA polymerase subunit beta' (Syntrophus aciditrophicus (strain SB)).